The chain runs to 552 residues: Methyl-coenzyme M reductase II subunit alpha (552 aa).

Q150 contributes to the coenzyme F430 binding site. Residues R228, 259–260 (KH), and R273 each bind coenzyme B. Coenzyme M is bound by residues Y335 and Y446.

It belongs to the methyl-coenzyme M reductase alpha subunit family. In terms of assembly, MCR is a hexamer of two alpha, two beta, and two gamma chains, forming a dimer of heterotrimers. Coenzyme F430 serves as cofactor.

The enzyme catalyses coenzyme B + methyl-coenzyme M = methane + coenzyme M-coenzyme B heterodisulfide. The protein operates within one-carbon metabolism; methyl-coenzyme M reduction; methane from methyl-coenzyme M: step 1/1. Component of the methyl-coenzyme M reductase (MCR) I that catalyzes the reductive cleavage of methyl-coenzyme M (CoM-S-CH3 or 2-(methylthio)ethanesulfonate) using coenzyme B (CoB or 7-mercaptoheptanoylthreonine phosphate) as reductant which results in the production of methane and the mixed heterodisulfide of CoB and CoM (CoM-S-S-CoB). This is the final step in methanogenesis. The protein is Methyl-coenzyme M reductase II subunit alpha (mrtA) of Methanocaldococcus jannaschii (strain ATCC 43067 / DSM 2661 / JAL-1 / JCM 10045 / NBRC 100440) (Methanococcus jannaschii).